Here is a 302-residue protein sequence, read N- to C-terminus: NAD kinase 2 (302 aa).

The active-site Proton acceptor is aspartate 78. Residues 78-79 (DG), 152-153 (NE), aspartate 182, and 193-198 (TAYSLS) contribute to the NAD(+) site.

It belongs to the NAD kinase family. A divalent metal cation is required as a cofactor.

The protein localises to the cytoplasm. It catalyses the reaction NAD(+) + ATP = ADP + NADP(+) + H(+). In terms of biological role, involved in the regulation of the intracellular balance of NAD and NADP, and is a key enzyme in the biosynthesis of NADP. Catalyzes specifically the phosphorylation on 2'-hydroxyl of the adenosine moiety of NAD to yield NADP. This Prochlorococcus marinus (strain NATL2A) protein is NAD kinase 2.